Consider the following 316-residue polypeptide: 4-hydroxy-3-methylbut-2-enyl diphosphate reductase (316 aa).

Position 12 (C12) interacts with [4Fe-4S] cluster. 2 residues coordinate (2E)-4-hydroxy-3-methylbut-2-enyl diphosphate: H41 and H74. Positions 41 and 74 each coordinate dimethylallyl diphosphate. The isopentenyl diphosphate site is built by H41 and H74. Position 96 (C96) interacts with [4Fe-4S] cluster. Position 124 (H124) interacts with (2E)-4-hydroxy-3-methylbut-2-enyl diphosphate. H124 lines the dimethylallyl diphosphate pocket. Residue H124 participates in isopentenyl diphosphate binding. The Proton donor role is filled by E126. T167 is a (2E)-4-hydroxy-3-methylbut-2-enyl diphosphate binding site. C197 serves as a coordination point for [4Fe-4S] cluster. Positions 225, 226, 227, and 269 each coordinate (2E)-4-hydroxy-3-methylbut-2-enyl diphosphate. The dimethylallyl diphosphate site is built by S225, S226, N227, and S269. Isopentenyl diphosphate-binding residues include S225, S226, N227, and S269.

The protein belongs to the IspH family. Homodimer. [4Fe-4S] cluster is required as a cofactor.

The catalysed reaction is isopentenyl diphosphate + 2 oxidized [2Fe-2S]-[ferredoxin] + H2O = (2E)-4-hydroxy-3-methylbut-2-enyl diphosphate + 2 reduced [2Fe-2S]-[ferredoxin] + 2 H(+). It carries out the reaction dimethylallyl diphosphate + 2 oxidized [2Fe-2S]-[ferredoxin] + H2O = (2E)-4-hydroxy-3-methylbut-2-enyl diphosphate + 2 reduced [2Fe-2S]-[ferredoxin] + 2 H(+). It functions in the pathway isoprenoid biosynthesis; dimethylallyl diphosphate biosynthesis; dimethylallyl diphosphate from (2E)-4-hydroxy-3-methylbutenyl diphosphate: step 1/1. Its pathway is isoprenoid biosynthesis; isopentenyl diphosphate biosynthesis via DXP pathway; isopentenyl diphosphate from 1-deoxy-D-xylulose 5-phosphate: step 6/6. Catalyzes the conversion of 1-hydroxy-2-methyl-2-(E)-butenyl 4-diphosphate (HMBPP) into a mixture of isopentenyl diphosphate (IPP) and dimethylallyl diphosphate (DMAPP). Acts in the terminal step of the DOXP/MEP pathway for isoprenoid precursor biosynthesis. This Pectobacterium carotovorum subsp. carotovorum (strain PC1) protein is 4-hydroxy-3-methylbut-2-enyl diphosphate reductase.